A 249-amino-acid chain; its full sequence is Cyclin-dependent kinase inhibitor 2 (249 aa).

The disordered stretch occupies residues 118–180 (KVCTQAGEDH…MCRRSSTTSA (63 aa)). The segment covering 161-180 (AESNQEAKQQMCRRSSTTSA) has biased composition (polar residues).

It belongs to the CDI family. ICK/KRP subfamily.

The protein is Cyclin-dependent kinase inhibitor 2 (KRP2) of Oryza sativa subsp. japonica (Rice).